The sequence spans 619 residues: Isocitrate dehydrogenase kinase/phosphatase (619 aa).

Residues 354–360 (APGIRGM) and lysine 375 contribute to the ATP site. The active site involves aspartate 409.

The protein belongs to the AceK family.

The protein resides in the cytoplasm. The enzyme catalyses L-seryl-[isocitrate dehydrogenase] + ATP = O-phospho-L-seryl-[isocitrate dehydrogenase] + ADP + H(+). In terms of biological role, bifunctional enzyme which can phosphorylate or dephosphorylate isocitrate dehydrogenase (IDH) on a specific serine residue. This is a regulatory mechanism which enables bacteria to bypass the Krebs cycle via the glyoxylate shunt in response to the source of carbon. When bacteria are grown on glucose, IDH is fully active and unphosphorylated, but when grown on acetate or ethanol, the activity of IDH declines drastically concomitant with its phosphorylation. The chain is Isocitrate dehydrogenase kinase/phosphatase from Bordetella bronchiseptica (strain ATCC BAA-588 / NCTC 13252 / RB50) (Alcaligenes bronchisepticus).